A 191-amino-acid chain; its full sequence is Calcium-activated potassium channel subunit beta-1 (191 aa).

Residues 1–18 (MGKKLVMAQKRGETRALC) are Cytoplasmic-facing. Residues 19–39 (LGVAMVVCAAITYYILGTTVL) form a helical membrane-spanning segment. Topologically, residues 40-155 (PLYQKSVWTQ…VVYQRLYGPQ (116 aa)) are extracellular. 2 N-linked (GlcNAc...) asparagine glycosylation sites follow: Asn80 and Asn142. A helical membrane pass occupies residues 156 to 176 (ILLFSFFWPTFLLTGGLLIIA). Residues 177-191 (MVKLNRSLSVLAAQK) lie on the Cytoplasmic side of the membrane.

This sequence belongs to the KCNMB (TC 8.A.14.1) family. KCNMB1 subfamily. Interacts with KCNMA1 tetramer. There are probably 4 molecules of KCMNB1 per KCNMA1 tetramer. Post-translationally, N-glycosylated. As to expression, weakly expressed. In brain, it is expressed in a few discrete populations of neurons that also express KCNMA1.

It is found in the membrane. Its function is as follows. Regulatory subunit of the calcium activated potassium KCNMA1 (maxiK) channel. Modulates the calcium sensitivity and gating kinetics of KCNMA1, thereby contributing to KCNMA1 channel diversity. Increases the apparent Ca(2+)/voltage sensitivity of the KCNMA1 channel. It also modifies KCNMA1 channel kinetics and alters its pharmacological properties. It slows down the activation and the deactivation kinetics of the channel. Acts as a negative regulator of smooth muscle contraction by enhancing the calcium sensitivity to KCNMA1. Its presence is also a requirement for internal binding of the KCNMA1 channel opener dehydrosoyasaponin I (DHS-1) triterpene glycoside and for external binding of the agonist hormone 17-beta-estradiol (E2). Increases the binding activity of charybdotoxin (CTX) toxin to KCNMA1 peptide blocker by increasing the CTX association rate and decreasing the dissociation rate. This is Calcium-activated potassium channel subunit beta-1 (Kcnmb1) from Rattus norvegicus (Rat).